A 458-amino-acid polypeptide reads, in one-letter code: Transmembrane protein adipocyte-associated 1 homolog (458 aa).

N-linked (GlcNAc...) asparagine glycans are attached at residues N21 and N45. Helical transmembrane passes span 81-101 (VILV…GSVI), 114-134 (AFTL…AYSM), 152-172 (IIIK…GLLF), 181-201 (ILIA…VQVI), 225-245 (FLFW…IMCL), 263-283 (LIYC…AALI), and 291-311 (LCFV…IIYF). 2 N-linked (GlcNAc...) asparagine glycosylation sites follow: N323 and N324. The interval 409-458 (RTGSDDYAHHRDSMLSEPSTGTTTRHLKGLGPQGSLVFEDDPSSLTSLRM) is disordered. The segment covering 411 to 422 (GSDDYAHHRDSM) has biased composition (basic and acidic residues).

It belongs to the UPF0359 family.

It localises to the membrane. The polypeptide is Transmembrane protein adipocyte-associated 1 homolog (tpra-1) (Caenorhabditis elegans).